A 451-amino-acid polypeptide reads, in one-letter code: V-type proton ATPase subunit S1 (451 aa).

A signal peptide spans 1 to 16 (MRVLFAVFSLIMACQA). Topologically, residues 17–407 (YDAVLFSNSR…DCTGTFSSGS (391 aa)) are lumenal. N-linked (GlcNAc...) asparagine glycosylation is found at N191, N235, N249, and N330. The chain crosses the membrane as a helical span at residues 408 to 428 (WMGIVSALVLIAGLMFGYVML). The Cytoplasmic segment spans residues 429–451 (QSVQTMDRFDDPKQRQIVINVRE).

It belongs to the vacuolar ATPase subunit S1 family. Accessory component of the multisubunit proton-transporting vacuolar (V)-ATPase protein pump. Expressed in pharynx, hypodermis, intestine, vulval hypodermis and the H-shape excretory cell.

The protein resides in the membrane. Functionally, accessory subunit of the proton-transporting vacuolar (V)-ATPase protein pump, which is required for luminal acidification of secretory vesicles. In the germline, required for the trafficking of the receptor RME-2 to the oocyte cell membrane where it regulates the uptake of yolk proteins. Also, plays an essential role in osmoregulation in the embryo, probably by regulating the proper formation of the eggshell. The protein is V-type proton ATPase subunit S1 of Caenorhabditis elegans.